Here is a 101-residue protein sequence, read N- to C-terminus: NAD(P)H-quinone oxidoreductase subunit 4L, chloroplastic (101 aa).

3 helical membrane-spanning segments follow: residues 2–22, 32–52, and 61–81; these read IFEH…YGLI, MCLE…SDFF, and IFSI…PAIV.

Belongs to the complex I subunit 4L family. As to quaternary structure, NDH is composed of at least 16 different subunits, 5 of which are encoded in the nucleus.

Its subcellular location is the plastid. The protein resides in the chloroplast thylakoid membrane. The enzyme catalyses a plastoquinone + NADH + (n+1) H(+)(in) = a plastoquinol + NAD(+) + n H(+)(out). The catalysed reaction is a plastoquinone + NADPH + (n+1) H(+)(in) = a plastoquinol + NADP(+) + n H(+)(out). Its function is as follows. NDH shuttles electrons from NAD(P)H:plastoquinone, via FMN and iron-sulfur (Fe-S) centers, to quinones in the photosynthetic chain and possibly in a chloroplast respiratory chain. The immediate electron acceptor for the enzyme in this species is believed to be plastoquinone. Couples the redox reaction to proton translocation, and thus conserves the redox energy in a proton gradient. In Phaseolus vulgaris (Kidney bean), this protein is NAD(P)H-quinone oxidoreductase subunit 4L, chloroplastic.